A 342-amino-acid chain; its full sequence is Heat-inducible transcription repressor HrcA (342 aa).

This sequence belongs to the HrcA family.

Negative regulator of class I heat shock genes (grpE-dnaK-dnaJ and groELS operons). Prevents heat-shock induction of these operons. This Oceanobacillus iheyensis (strain DSM 14371 / CIP 107618 / JCM 11309 / KCTC 3954 / HTE831) protein is Heat-inducible transcription repressor HrcA.